The chain runs to 722 residues: Polyribonucleotide nucleotidyltransferase (722 aa).

Mg(2+)-binding residues include Asp487 and Asp493. Positions Pro554–Ile613 constitute a KH domain. In terms of domain architecture, S1 motif spans Gly623–Lys691.

This sequence belongs to the polyribonucleotide nucleotidyltransferase family. The cofactor is Mg(2+).

It localises to the cytoplasm. It carries out the reaction RNA(n+1) + phosphate = RNA(n) + a ribonucleoside 5'-diphosphate. Its function is as follows. Involved in mRNA degradation. Catalyzes the phosphorolysis of single-stranded polyribonucleotides processively in the 3'- to 5'-direction. The sequence is that of Polyribonucleotide nucleotidyltransferase from Polynucleobacter asymbioticus (strain DSM 18221 / CIP 109841 / QLW-P1DMWA-1) (Polynucleobacter necessarius subsp. asymbioticus).